A 274-amino-acid chain; its full sequence is 3-methyl-2-oxobutanoate hydroxymethyltransferase (274 aa).

Mg(2+)-binding residues include aspartate 49 and aspartate 88. Residues aspartate 49–serine 50, aspartate 88, and lysine 118 each bind 3-methyl-2-oxobutanoate. Glutamate 120 serves as a coordination point for Mg(2+). Glutamate 187 acts as the Proton acceptor in catalysis.

It belongs to the PanB family. In terms of assembly, homodecamer; pentamer of dimers. Mg(2+) serves as cofactor.

It localises to the cytoplasm. It carries out the reaction 3-methyl-2-oxobutanoate + (6R)-5,10-methylene-5,6,7,8-tetrahydrofolate + H2O = 2-dehydropantoate + (6S)-5,6,7,8-tetrahydrofolate. It functions in the pathway cofactor biosynthesis; (R)-pantothenate biosynthesis; (R)-pantoate from 3-methyl-2-oxobutanoate: step 1/2. Its function is as follows. Catalyzes the reversible reaction in which hydroxymethyl group from 5,10-methylenetetrahydrofolate is transferred onto alpha-ketoisovalerate to form ketopantoate. The polypeptide is 3-methyl-2-oxobutanoate hydroxymethyltransferase (Rhodopseudomonas palustris (strain TIE-1)).